The chain runs to 460 residues: Cobyrinate a,c-diamide synthase (460 aa).

In terms of domain architecture, GATase cobBQ-type spans 248–440 (KIAVARDAAF…THFHFGSSTK (193 aa)). The active-site Nucleophile is the Cys-331.

This sequence belongs to the CobB/CbiA family. The cofactor is Mg(2+).

It carries out the reaction cob(II)yrinate + 2 L-glutamine + 2 ATP + 2 H2O = cob(II)yrinate a,c diamide + 2 L-glutamate + 2 ADP + 2 phosphate + 2 H(+). It participates in cofactor biosynthesis; adenosylcobalamin biosynthesis; cob(II)yrinate a,c-diamide from sirohydrochlorin (anaerobic route): step 10/10. Functionally, catalyzes the ATP-dependent amidation of the two carboxylate groups at positions a and c of cobyrinate, using either L-glutamine or ammonia as the nitrogen source. The polypeptide is Cobyrinate a,c-diamide synthase (Priestia megaterium (Bacillus megaterium)).